An 89-amino-acid chain; its full sequence is uncharacterized protein (89 aa).

M1 is a topological domain (cytoplasmic). The chain crosses the membrane as a helical span at residues 2-22 (LFEIIYIVSSLFYIVSIIYTL). The Extracellular segment spans residues 23 to 89 (MRIKHINTVA…ELKKSKLCEG (67 aa)).

Its subcellular location is the host membrane. This is an uncharacterized protein from Sulfolobus islandicus filamentous virus (isolate Iceland/Hveragerdi) (SIFV).